The sequence spans 103 residues: Large ribosomal subunit protein bL28 (103 aa).

The protein belongs to the bacterial ribosomal protein bL28 family.

This chain is Large ribosomal subunit protein bL28, found in Anaplasma phagocytophilum (strain HZ).